The primary structure comprises 339 residues: UDP-N-acetylenolpyruvoylglucosamine reductase (339 aa).

In terms of domain architecture, FAD-binding PCMH-type spans 19–189; that stretch reads VDVRAQLFAE…LRVRFALNRV (171 aa). The active site involves Arg166. Ser239 acts as the Proton donor in catalysis. The active site involves Glu335.

This sequence belongs to the MurB family. It depends on FAD as a cofactor.

It localises to the cytoplasm. It catalyses the reaction UDP-N-acetyl-alpha-D-muramate + NADP(+) = UDP-N-acetyl-3-O-(1-carboxyvinyl)-alpha-D-glucosamine + NADPH + H(+). The protein operates within cell wall biogenesis; peptidoglycan biosynthesis. In terms of biological role, cell wall formation. The sequence is that of UDP-N-acetylenolpyruvoylglucosamine reductase from Pseudomonas fluorescens (strain Pf0-1).